The chain runs to 341 residues: S-adenosylmethionine:tRNA ribosyltransferase-isomerase (341 aa).

This sequence belongs to the QueA family. Monomer.

It is found in the cytoplasm. It catalyses the reaction 7-aminomethyl-7-carbaguanosine(34) in tRNA + S-adenosyl-L-methionine = epoxyqueuosine(34) in tRNA + adenine + L-methionine + 2 H(+). It functions in the pathway tRNA modification; tRNA-queuosine biosynthesis. Its function is as follows. Transfers and isomerizes the ribose moiety from AdoMet to the 7-aminomethyl group of 7-deazaguanine (preQ1-tRNA) to give epoxyqueuosine (oQ-tRNA). This Alkaliphilus metalliredigens (strain QYMF) protein is S-adenosylmethionine:tRNA ribosyltransferase-isomerase.